Here is a 239-residue protein sequence, read N- to C-terminus: MAEPVATPTVELSGVRKDYVAGPVVTPVLHGVDLTVGAGEFTALMGPSGSGKSTLLNLIGLLDRPTGGRVRVAGLDTAALDDDAMARTRGRTIGFVFQFHHLLPAFTALENVMIPMMAARGRAAPDMAECGEHLLRQVGLGAVLHRRATQLSGGQQQRVAIARALAMAPRLVLADEPTGNLDTHAADEVFALLREFNRRAGITFLIVTHDPRLADRCDRIVELVDGRIVADGPHRRSGA.

The ABC transporter domain maps to 10 to 239 (VELSGVRKDY…ADGPHRRSGA (230 aa)). Residue 46–53 (GPSGSGKS) coordinates ATP.

The protein belongs to the ABC transporter superfamily. Lipoprotein translocase (TC 3.A.1.125) family. In terms of assembly, the complex is composed of two ATP-binding proteins (LolD) and two transmembrane proteins (LolC and LolE).

It localises to the cell inner membrane. Part of the ABC transporter complex LolCDE involved in the translocation of mature outer membrane-directed lipoproteins, from the inner membrane to the periplasmic chaperone, LolA. Responsible for the formation of the LolA-lipoprotein complex in an ATP-dependent manner. The polypeptide is Lipoprotein-releasing system ATP-binding protein LolD (Anaeromyxobacter dehalogenans (strain 2CP-C)).